Reading from the N-terminus, the 501-residue chain is TNF receptor-associated factor 2 (501 aa).

Residue alanine 2 is modified to N-acetylalanine. Residue serine 5 is modified to Phosphoserine. Threonine 7 is subject to Phosphothreonine. The residue at position 11 (serine 11) is a Phosphoserine. Residue threonine 22 is modified to Phosphothreonine. A Glycyl lysine isopeptide (Lys-Gly) (interchain with G-Cter in ubiquitin) cross-link involves residue lysine 31. The RING-type zinc finger occupies 34–73 (CSACRNVLRRPFQAQCGHRYCSFCLASILSSGPQNCAACV). Threonine 117 is subject to Phosphothreonine; by PKC. 2 TRAF-type zinc fingers span residues 124–180 (CHEG…AHHE) and 177–233 (AHHE…EKQQ). The important for interaction with BIRC2 and BIRC3 stretch occupies residues 283 to 293 (ENIVCVLNREV). The stretch at 299–348 (TAEACSRQHRLDQDKIEALSSKVQQLERSIGLKDLAMADLEQKVLEMEAS) forms a coiled coil. A Glycyl lysine isopeptide (Lys-Gly) (interchain with G-Cter in ubiquitin) cross-link involves residue lysine 320. Positions 351 to 496 (DGVFIWKISD…DDAIFIKAIV (146 aa)) constitute an MATH domain.

It belongs to the TNF receptor-associated factor family. A subfamily. In terms of assembly, homotrimer. Heterotrimer with TRAF1. Heterotrimer with TRAF3 (via TRAF domain). The domain containing the RING-type and the first TRAF-type zinc finger can also form homodimers (in vitro). Interacts with TNFRSF1B/TNFR2. Interacts with TNFRSF5/CD40. Interacts with TNFRSF4, TNFRSF7/CD27, TNFRSF8/CD30, TNFRSF9/CD137, TNFRSF11A/RANK, TNFRSF13B/TACI, TNFRSF14, TNFRSF16/NGFR, TNFRSF17/BCMA, TNFRSF18/AITR, TNFRSF19/TROY, TNFRSF19L/RELT and EDAR. Stimulation of TNF-alpha receptor TNFRSF1A leads to the formation of two distinct signaling complexes. Plasma membrane-bound complex I is composed of TNFRSF1A, TRADD, RIPK1, TRAF2 and BIRC2/c-IAP1 or BIRC3 which interacts with CHUCK/IKK-alpha, IKBKB/IKK-beta and IKBKG/IKK-gamma promoting cell survival. Subsequently, TRADD, RIPK1 and TRAF2 dissociate from TNFRSF1A and form cytoplasmic complex II with FADD and caspase CASP8 promoting cell apoptosis. Interacts with TRADD. Identified in a complex with TNFRSF1A, RIPK1 and IKBKB/IKK-beta. Interacts with RIPK2. Interacts with BIRC2 and BIRC3 N-terminus; a single BIRC2 or BIRC3 molecule interacts with a heterotrimer formed by TRAF1 and TRAF2, or a TRAF2 homotrimer. Identified in a complex composed of TRAF2, TRAF3, BIRC2 and BIRC3. Interacts with BIRC2; the interaction promotes BIRC2 stability. Interaction with BIRC2 and/or BIRC3 is essential for ubiquitination of IKBKE, degradation of NFKBIA and activation of NF-kappa-B. Within complex I, phosphorylated TRAF2 interacts (via 'Lys-63'-linked polyubiquitin chains) with CHUCK/IKK-alpha, IKBKB/IKK-beta, IKBKG/IKK-gamma TAB2, TAB3 and TAK1 in response to TNF-alpha stimulation. Within complex I, interacts with UXT isoform 1 (via TPQE motif); the interaction prevents the recruitment of FADD and CASP8/caspase 8 to complex I. Forms a complex composed of TNFRSF8/CD30 or TNFRSF1B/TNFR2, and TRAF1, TRAF2 and E3 ligase TRAIP. Within the complex, interacts with TRAIP; the interaction inhibits TRAF2-mediated NF-kappa B activation. Component of a complex composed of TANK and TBK1. Interacts with TRPC4AP. Interacts with MAP3K1/MEKK1, MAP3K5/ASK1 and MAP3K11/MLK3 in response to TNF-alpha stimulation; the interaction leads to JNK activation and interaction with MAP3K5 is inhibited by PRMT1. Component of a complex composed of MAP3K14/NIK BIRC3 and TRAF3; the interaction leads to BIRC2/3-mediated ubiquitination of TRAF3 upon CD40 engagement in a TRAF2-dependent manner. Interacts with MAP3K14/NIK in response to TNF-alpha stimulation; the interaction leads to NF-kappa B activation. Interacts with PEG3; the interaction may promote TRAF2-mediated NF-kappa B activation. Interacts with HIVEP3; the interaction may inhibit TNF-alpha-TRAF2-mediated NF-kappa B and JNK activation. Interacts with TANK/ITRAF; the interaction prevents interaction between TNFRSF1B/TNFR2 and TRAF2. Interacts with deubiquitinating enzyme CYLD; the interaction results in the deubiquitination and inactivation of TRAF2. Interacts with SIAH2; the interaction leads to TRAF2 ubiquitination and degradation. Interacts with E2 conjugating enzyme UBE2N/Ubc13, E3 ligase ITCH and RNF11 in response to TNF-alpha stimulation. Interacts with ubiquitin-editing enzyme TNFAIP3/A20 in response to TNF-alpha stimulation; the interaction promotes TRAF2 dissociation from UBE2N/Ubc13, ITCH, RNF11 and TAX1BP1 and prevents prolonged TRAF-2 ubiquitination. Interacts with TAX1BP1 in response to TNF-alpha stimulation; the interaction promotes TRAF2 dissociation from UBE2N/Ubc13 and TNFAIP3/A20, and prevents prolonged TRAF-2 ubiquitination. Interacts (via C-terminus) with EIF2AK2/PKR (via the kinase catalytic domain). Interacts with deubiquitinating enzyme USP48. Interacts with PTPN2; probably involved in TNF-mediated signaling. Interacts with Toll-like receptor TLR4/3 adapter TICAM1/TRIF; the interaction may promote TICAM1 ubiquitination. Interacts with kinase/endoribonuclease ERN1/IRE1 and DAB2IP in response to ER stress; the interaction requires DAB2IP. Interacts with ERN1/IRE1 and TAOK3 in response to ER stress; the interaction may promote TRAF2 phosphorylation. Interacts (via zinc fingers) with DAB2IP (via C-terminus PER domain)in response to TNF-alpha stimulation. Interacts with CASP8AP2/FLASH. Interacts with NFATC2IP; the interaction may repress IL-4 production in T cells. Interacts with kinase CDK9. Interacts with sphingosine kinase 1 SPHK1. Interacts with kinase TNIK. Interacts with TRAFD1. Interacts with DNA phosphodiesterase TDP2. Interacts with MAVS/IPS1. Interacts with CARD14. Interacts with Epstein-Barr virus LMP1/BNFL1. Interacts with GPS2. Interacts with XPNPEP3. Interacts with RIPK3. Interacts with RELL2. Interacts with LRRC19. Interacts with GAPDH; promoting TRAF2 ubiquitination. In terms of processing, phosphorylated at several serine residues within the first 128 amino acid residues. Phosphorylated at Thr-117 in response to signaling via TNF and TNFRSF1A. Phosphorylation at Thr-117 is required for 'Lys-63'-linked polyubiquitination, but not for 'Lys-48'-linked polyubiquitination. Phosphorylation at Thr-117 is important for interaction with IKKA and IKKB, activation of IKK and subsequent activation of NF-kappa-B. Undergoes both 'Lys-48'-linked and 'Lys-63'-linked polyubiquitination. Polyubiquitinated via 'Lys-63'-linked ubiquitin in response to TNF signaling; this requires prior phosphorylation at Thr-117. 'Lys-63'-linked polyubiquitination promotes TRAF2-mediated activation of NF-kappa-B. Can be polyubiquitinated at several Lys residues via 'Lys-48'-linked ubiquitin chains in response to TNF signaling, leading to proteasomal degradation. Autoubiquitinated, leading to its subsequent proteasomal degradation. Polyubiquitinated by BIRC2 and SIAH2, leading to its subsequent proteasomal degradation. Deubiquitinated by CYLD, a protease that specifically cleaves 'Lys-63'-linked polyubiquitin chains. Ubiquination is inhibited by LRRC19; inhibits proteasomal degradation. Ubiquitinated at Lys-320 by the SCF(FBXL2) complex, leading to its degradation by the proteasome. Ubiquitinated by E3 ubiquitin-protein ligase complex containing FBXO7; leading to repression of NF-kappa-B signaling.

The protein localises to the cytoplasm. It carries out the reaction S-ubiquitinyl-[E2 ubiquitin-conjugating enzyme]-L-cysteine + [acceptor protein]-L-lysine = [E2 ubiquitin-conjugating enzyme]-L-cysteine + N(6)-ubiquitinyl-[acceptor protein]-L-lysine.. It participates in protein modification; protein ubiquitination. Its activity is regulated as follows. Has very low E3 ubiquitin ligase activity in the absence of sphingosine-1-phosphate. E3 ubiquitin ligase activity is strongly activated by cytoplasmic sphingosine-1-phosphate. Its function is as follows. E3 ubiquitin-protein ligase that regulates activation of NF-kappa-B and JNK and plays a central role in the regulation of cell survival and apoptosis. Catalyzes 'Lys-63'-linked ubiquitination of target proteins, such as BIRC3, IKBKE, MLST8, RIPK1 and TICAM1. Is an essential constituent of several E3 ubiquitin-protein ligase complexes, where it promotes the ubiquitination of target proteins by bringing them into contact with other E3 ubiquitin ligases. Regulates BIRC2 and BIRC3 protein levels by inhibiting their autoubiquitination and subsequent degradation; this does not depend on the TRAF2 RING-type zinc finger domain. Plays a role in mediating activation of NF-kappa-B by EIF2AK2/PKR. In complex with BIRC2 or BIRC3, promotes ubiquitination of IKBKE. Acts as a regulator of mTORC1 and mTORC2 assembly by mediating 'Lys-63'-linked ubiquitination of MLST8, thereby inhibiting formation of the mTORC2 complex, while facilitating assembly of the mTORC1 complex. Required for normal antibody isotype switching from IgM to IgG. The chain is TNF receptor-associated factor 2 from Homo sapiens (Human).